We begin with the raw amino-acid sequence, 185 residues long: Translocon-associated protein subunit gamma (185 aa).

Residue M1 is modified to N-acetylmethionine. Residues M1–K27 lie on the Lumenal side of the membrane. Phosphoserine occurs at positions 7 and 11. The chain crosses the membrane as a helical span at residues S28–W48. The Cytoplasmic segment spans residues R49–D54. The helical transmembrane segment at L55–A76 threads the bilayer. The Lumenal portion of the chain corresponds to Y77–T135. S105 bears the Phosphoserine mark. Residues F136 to L157 traverse the membrane as a helical segment. The Cytoplasmic segment spans residues K158–T163. The helical transmembrane segment at V164–S184 threads the bilayer.

It belongs to the TRAP-gamma family. In terms of assembly, heterotetramer of TRAP-alpha, TRAP-beta, TRAP-delta and TRAP-gamma.

The protein resides in the endoplasmic reticulum membrane. Functionally, TRAP proteins are part of a complex whose function is to bind calcium to the ER membrane and thereby regulate the retention of ER resident proteins. This chain is Translocon-associated protein subunit gamma (SSR3), found in Homo sapiens (Human).